The chain runs to 144 residues: MLMPKRVKYRRQHRGKMRGQAKGGTTVAFGEYGLQATEASWITSRQIEAARIAMTRYMKRGGKVWIKIFPDKPYTAKPLEVRMGSGKGAPEGWVAVVKPGKIMFEIAGVSEEVAREALRLASHKLPVKTKFVKREEIGGESNEG.

Belongs to the universal ribosomal protein uL16 family. Part of the 50S ribosomal subunit.

Functionally, binds 23S rRNA and is also seen to make contacts with the A and possibly P site tRNAs. The chain is Large ribosomal subunit protein uL16 from Oceanobacillus iheyensis (strain DSM 14371 / CIP 107618 / JCM 11309 / KCTC 3954 / HTE831).